A 271-amino-acid chain; its full sequence is Chymotrypsin BII (271 aa).

The N-terminal stretch at 1 to 15 (MIGKLSLLLVCVAVA) is a signal peptide. Residues 16–45 (SGNPAAGKPWHWKSPKPLVDPRIHVNATPR) constitute a propeptide, activation peptide. Residues 46 to 268 (IVGGVEATPH…YLDWIEQKTG (223 aa)) form the Peptidase S1 domain. Residues Cys71 and Cys87 are joined by a disulfide bond. Active-site charge relay system residues include His86 and Asp132. Intrachain disulfides connect Cys196–Cys209 and Cys219–Cys245. Residue Ser223 is the Charge relay system of the active site.

This sequence belongs to the peptidase S1 family.

Its subcellular location is the secreted. It localises to the extracellular space. The catalysed reaction is Preferential cleavage: Tyr-|-Xaa, Trp-|-Xaa, Phe-|-Xaa, Leu-|-Xaa.. In terms of biological role, serine protease with chymotryptic and collagenolytic activities. This chain is Chymotrypsin BII, found in Penaeus vannamei (Whiteleg shrimp).